We begin with the raw amino-acid sequence, 806 residues long: Mitogen-activated protein kinase 7 (806 aa).

Residues 1–23 (MAEPLKEEDGEDGSGEPPGRVKA) are disordered. Position 2 is an N-acetylalanine (A2). A required for cytoplasmic targeting region spans residues 2 to 77 (AEPLKEEDGE…VVSSARRRLT (76 aa)). One can recognise a Protein kinase domain in the interval 55–347 (YEIIETIGNG…AAAALRHPFL (293 aa)). ATP-binding positions include 61–69 (IGNGAYGVV) and K84. Residues 78-139 (GQQVAIKKIP…FRSVYVVLDL (62 aa)) form a required for binding to MAP2K5 region. Residues 140–406 (MESDLHQIIH…QQIRFQPSLQ (267 aa)) are necessary for oligomerization. The Proton acceptor role is filled by D182. The TXY signature appears at 219–221 (TEY). Positions 407-806 (PVASEPVCPD…LSDLPDLQEP (400 aa)) are may not be required for kinase activity; required to stimulate MEF2C activity. 2 disordered regions span residues 424-473 (APSG…AISD) and 488-727 (RSRL…PKGS). Residues 433–443 (SPPPALPPCSD) are compositionally biased toward pro residues. 3 stretches are compositionally biased toward basic and acidic residues: residues 502–519 (PEPR…EREE), 527–544 (RAKE…KERG), and 563–573 (DNDRSLLERWT). The Nuclear localization signal motif lies at 505-539 (RKPVTAQERQREREEKRRRRQERAKEREKRRQERE). The span at 578-592 (PPAPAPAPAPAPAPA) shows a compositional bias: pro residues. The span at 593 to 603 (PSSAQPTSTPT) shows a compositional bias: low complexity. Over residues 627–643 (VCPPPGPVPQPAGPIPA) the composition is skewed to pro residues. A compositionally biased stretch (polar residues) spans 647–660 (TAPSTSLLASQSLV). Pro residues predominate over residues 678–689 (PSGPPPPDPGLT). A compositionally biased stretch (polar residues) spans 693–710 (STSESPDVNLVTQQLSKS). Position 710 is a phosphoserine (S710). T723 is subject to Phosphothreonine.

Belongs to the protein kinase superfamily. CMGC Ser/Thr protein kinase family. MAP kinase subfamily. In terms of assembly, interacts with MAP2K5. Forms oligomers. Interacts with MEF2A, MEF2C and MEF2D; the interaction phosphorylates the MEF2s and enhances transcriptional activity of MEF2A, MEF2C but not MEF2D. Interacts with SGK1. Interacts with PML. Interacts (via N-terminal half) with HSP90AB1-CDC37 chaperone complex in resting cells; the interaction is MAP2K5-independent and prevents MAPK7 from ubiquitination and proteasomal degradation. Interacts with STUB1/CHIP; the interaction is enhanced in the presence of IGF1 or MAP2K5 and promotes STUB1/CHIP E3 ligase activity. Mg(2+) is required as a cofactor. Dually phosphorylated on Thr-219 and Tyr-221, which activates the enzyme. In terms of tissue distribution, detected in testis, brain, kidney, lung and heart. Detected in total embryo (at protein level).

The protein localises to the cytoplasm. The protein resides in the nucleus. Its subcellular location is the PML body. It carries out the reaction L-seryl-[protein] + ATP = O-phospho-L-seryl-[protein] + ADP + H(+). The catalysed reaction is L-threonyl-[protein] + ATP = O-phospho-L-threonyl-[protein] + ADP + H(+). Activated by tyrosine and threonine phosphorylation. Activated in response to hyperosmolarity, hydrogen peroxide, and epidermal growth factor (EGF). Plays a role in various cellular processes such as proliferation, differentiation and cell survival. The upstream activator of MAPK7 is the MAPK kinase MAP2K5. Upon activation, it translocates to the nucleus and phosphorylates various downstream targets including MEF2C. EGF activates MAPK7 through a Ras-independent and MAP2K5-dependent pathway. As part of the MAPK/ERK signaling pathway, acts as a negative regulator of apoptosis in cardiomyocytes via interaction with STUB1/CHIP and promotion of STUB1-mediated ubiquitination and degradation of ICER-type isoforms of CREM. May have a role in muscle cell differentiation. May be important for endothelial function and maintenance of blood vessel integrity. MAP2K5 and MAPK7 interact specifically with one another and not with MEK1/ERK1 or MEK2/ERK2 pathways. Phosphorylates SGK1 at Ser-78 and this is required for growth factor-induced cell cycle progression. Involved in the regulation of p53/TP53 by disrupting the PML-MDM2 interaction. In Mus musculus (Mouse), this protein is Mitogen-activated protein kinase 7 (Mapk7).